An 876-amino-acid polypeptide reads, in one-letter code: Alanine--tRNA ligase (876 aa).

The Zn(2+) site is built by His562, His566, Cys666, and His670.

Belongs to the class-II aminoacyl-tRNA synthetase family. It depends on Zn(2+) as a cofactor.

It is found in the cytoplasm. The catalysed reaction is tRNA(Ala) + L-alanine + ATP = L-alanyl-tRNA(Ala) + AMP + diphosphate. In terms of biological role, catalyzes the attachment of alanine to tRNA(Ala) in a two-step reaction: alanine is first activated by ATP to form Ala-AMP and then transferred to the acceptor end of tRNA(Ala). Also edits incorrectly charged Ser-tRNA(Ala) and Gly-tRNA(Ala) via its editing domain. This chain is Alanine--tRNA ligase, found in Hahella chejuensis (strain KCTC 2396).